Here is a 343-residue protein sequence, read N- to C-terminus: MTGEAVSGQDVSNPGKSSWRVTVLGGGAWGTALALAMLRAGHKVRLFARDPQTVAAIGQGQNPRYLPGIAIAPGIEATSDIAAALSGADCVLAVTPAQSLRATLAVAKDNMPDGIPLVLCAKGIERDTGALLSAIVEEILPRNPVAALSGPSFATDVARGLPTAVVVAARDEALAADLAARFSAQNLRCYSSDDLIGVEIGGALKNVFAIAAGAVTGAGLGASAQAAMVTRGFVELRRIGAAFGARPETLMGLSGLGDLLLTCSSAQSRNFAYGLTLGQGKALAGLPLAEGVPTAAIAARIAVERGIDAPIIAAVAAILDGAITISQAVTALMTRPLKTETND.

The NADPH site is built by Trp-29, Arg-49, and Lys-122. Residues Lys-122, Gly-150, and Ser-152 each contribute to the sn-glycerol 3-phosphate site. An NADPH-binding site is contributed by Ala-154. Sn-glycerol 3-phosphate-binding residues include Lys-205, Asp-258, Ser-268, Arg-269, and Asn-270. Catalysis depends on Lys-205, which acts as the Proton acceptor. Arg-269 contacts NADPH. 2 residues coordinate NADPH: Leu-288 and Glu-290.

This sequence belongs to the NAD-dependent glycerol-3-phosphate dehydrogenase family.

The protein localises to the cytoplasm. It catalyses the reaction sn-glycerol 3-phosphate + NAD(+) = dihydroxyacetone phosphate + NADH + H(+). It carries out the reaction sn-glycerol 3-phosphate + NADP(+) = dihydroxyacetone phosphate + NADPH + H(+). It functions in the pathway membrane lipid metabolism; glycerophospholipid metabolism. In terms of biological role, catalyzes the reduction of the glycolytic intermediate dihydroxyacetone phosphate (DHAP) to sn-glycerol 3-phosphate (G3P), the key precursor for phospholipid synthesis. This is Glycerol-3-phosphate dehydrogenase [NAD(P)+] from Mesorhizobium japonicum (strain LMG 29417 / CECT 9101 / MAFF 303099) (Mesorhizobium loti (strain MAFF 303099)).